The following is a 108-amino-acid chain: UPF0060 membrane protein Ent638_1931 (108 aa).

4 helical membrane passes run 6 to 26 (LLFFATALCEIIGCFLPWLWL), 29 to 49 (GASVFLLLPAGIALALFVWLL), 61 to 81 (AAYGGVYVCTALLWLRVVDGV), and 85 to 105 (AYDWAGALVALCGMLIIVAGW).

It belongs to the UPF0060 family.

The protein resides in the cell inner membrane. The protein is UPF0060 membrane protein Ent638_1931 of Enterobacter sp. (strain 638).